A 251-amino-acid chain; its full sequence is NADPH-dependent oxidoreductase (251 aa).

This sequence belongs to the flavin oxidoreductase frp family. The cofactor is FMN.

Reduces FMN, organic nitro compounds and disulfide DTNB. Involved in maintenance of the cellular redox state and the disulfide stress response. The chain is NADPH-dependent oxidoreductase (nfrA) from Staphylococcus aureus (strain USA300).